We begin with the raw amino-acid sequence, 1007 residues long: Beta-galactosidase (1007 aa).

A disordered region spans residues 29–48 (TIPPHSDHESFQSQEELEEG). The active-site Proton donor is the Glu465. Glu532 acts as the Nucleophile in catalysis.

The protein belongs to the glycosyl hydrolase 2 family. Monomer.

It carries out the reaction Hydrolysis of terminal non-reducing beta-D-galactose residues in beta-D-galactosides.. The chain is Beta-galactosidase (lacZ) from Lactobacillus delbrueckii subsp. bulgaricus.